A 222-amino-acid chain; its full sequence is Pre-mRNA cleavage factor Im 25 kDa subunit 1 (222 aa).

The region spanning 67–194 is the Nudix hydrolase domain; sequence GLRTCVEAVL…KLLAVPLCQL (128 aa). An interaction with RNA region spans residues 94–96; the sequence is SIF. A Nudix box motif is present at residues 101–122; the sequence is GRLRPGESDIEGLKRKLASKLS.

It belongs to the Nudix hydrolase family. CPSF5 subfamily. As to quaternary structure, homodimer. Component of the cleavage factor Im (CFIm) complex. Forms a complex with cleavage and polyadenylation specificity factor (CPSF) subunits FIPS5.

Its subcellular location is the nucleus. Its function is as follows. Component of the cleavage factor Im (CFIm) complex that plays a key role in pre-mRNA 3'-processing. Involved in association with CPSF6 or CPSF7 in pre-MRNA 3'-end poly(A) site cleavage and poly(A) addition. NUDT21/CPSF5 binds to cleavage and polyadenylation RNA substrates. The homodimer mediates simultaneous sequence-specific recognition of two 5'-UGUA-3' elements within the pre-mRNA. Binds to, but does not hydrolyze mono- and di-adenosine nucleotides. May have a role in mRNA export. The chain is Pre-mRNA cleavage factor Im 25 kDa subunit 1 from Arabidopsis thaliana (Mouse-ear cress).